We begin with the raw amino-acid sequence, 989 residues long: Phosphoenolpyruvate carboxylase (989 aa).

Active-site residues include H175 and K630.

Belongs to the PEPCase type 1 family. It depends on Mg(2+) as a cofactor.

The enzyme catalyses oxaloacetate + phosphate = phosphoenolpyruvate + hydrogencarbonate. Its function is as follows. Forms oxaloacetate, a four-carbon dicarboxylic acid source for the tricarboxylic acid cycle. The polypeptide is Phosphoenolpyruvate carboxylase (Prochlorococcus marinus (strain MIT 9301)).